Reading from the N-terminus, the 322-residue chain is RNA pseudouridine synthase 1 (322 aa).

Asp120 is an active-site residue.

It belongs to the pseudouridine synthase RluA family.

The catalysed reaction is a uridine in RNA = a pseudouridine in RNA. The protein is RNA pseudouridine synthase 1 of Arabidopsis thaliana (Mouse-ear cress).